The primary structure comprises 271 residues: Formamidopyrimidine-DNA glycosylase (271 aa).

Pro-2 acts as the Schiff-base intermediate with DNA in catalysis. Glu-3 acts as the Proton donor in catalysis. Lys-56 serves as the catalytic Proton donor; for beta-elimination activity. DNA-binding residues include His-89, Arg-107, and Arg-151. The FPG-type zinc-finger motif lies at 236–270; that stretch reads MVYARQGQPCRVCATPIKSLRQGQRSTFYCPHCQK. Arg-260 acts as the Proton donor; for delta-elimination activity in catalysis.

The protein belongs to the FPG family. As to quaternary structure, monomer. It depends on Zn(2+) as a cofactor.

It catalyses the reaction Hydrolysis of DNA containing ring-opened 7-methylguanine residues, releasing 2,6-diamino-4-hydroxy-5-(N-methyl)formamidopyrimidine.. It carries out the reaction 2'-deoxyribonucleotide-(2'-deoxyribose 5'-phosphate)-2'-deoxyribonucleotide-DNA = a 3'-end 2'-deoxyribonucleotide-(2,3-dehydro-2,3-deoxyribose 5'-phosphate)-DNA + a 5'-end 5'-phospho-2'-deoxyribonucleoside-DNA + H(+). Functionally, involved in base excision repair of DNA damaged by oxidation or by mutagenic agents. Acts as a DNA glycosylase that recognizes and removes damaged bases. Has a preference for oxidized purines, such as 7,8-dihydro-8-oxoguanine (8-oxoG). Has AP (apurinic/apyrimidinic) lyase activity and introduces nicks in the DNA strand. Cleaves the DNA backbone by beta-delta elimination to generate a single-strand break at the site of the removed base with both 3'- and 5'-phosphates. This Albidiferax ferrireducens (strain ATCC BAA-621 / DSM 15236 / T118) (Rhodoferax ferrireducens) protein is Formamidopyrimidine-DNA glycosylase.